We begin with the raw amino-acid sequence, 337 residues long: Cytoskeleton protein RodZ (337 aa).

The Cytoplasmic portion of the chain corresponds to 1-111; that stretch reads MNTEATHDQN…LGKRRKKRDG (111 aa). In terms of domain architecture, HTH cro/C1-type spans 19–71; the sequence is LRNAREQLGLSQQAVAERLCLKVSTVRDIEEDKAPADLASTFLRGYIRSYARL. The segment at residues 30–49 is a DNA-binding region (H-T-H motif); that stretch reads QQAVAERLCLKVSTVRDIEE. The helical; Signal-anchor for type II membrane protein transmembrane segment at 112–132 threads the bilayer; the sequence is WLMTFTWLVLFVVIGLSGAWW. Topologically, residues 133-337 are periplasmic; sequence WQDHKAQQEE…TLNAEQSPAQ (205 aa). Positions 145–167 are enriched in polar residues; the sequence is TMADQSSAELSSNSEQGQSVPLN. The interval 145-237 is disordered; that stretch reads TMADQSSAEL…ATTTPDGAAP (93 aa). The span at 168–207 shows a compositional bias: low complexity; that stretch reads TSTTTDPATTSTPPASVDTTATNTQTPAVTAPAPAVDPQQ. The span at 208–218 shows a compositional bias: polar residues; sequence NAVVSPSQANV. Residues 219–237 show a composition bias toward low complexity; it reads DTAATPAPTATTTPDGAAP.

It belongs to the RodZ family.

It localises to the cell inner membrane. Cytoskeletal protein that is involved in cell-shape control through regulation of the length of the long axis. The protein is Cytoskeleton protein RodZ of Escherichia coli (strain 55989 / EAEC).